An 833-amino-acid chain; its full sequence is DNA gyrase subunit A (833 aa).

The region spanning 34–500 (LPDVRDGLKP…AGDVRDIEDI (467 aa)) is the Topo IIA-type catalytic domain. The O-(5'-phospho-DNA)-tyrosine intermediate role is filled by Tyr122. Positions 527–533 (QKRGGQG) match the GyrA-box motif.

Belongs to the type II topoisomerase GyrA/ParC subunit family. As to quaternary structure, heterotetramer, composed of two GyrA and two GyrB chains. In the heterotetramer, GyrA contains the active site tyrosine that forms a transient covalent intermediate with DNA, while GyrB binds cofactors and catalyzes ATP hydrolysis.

It localises to the cytoplasm. It carries out the reaction ATP-dependent breakage, passage and rejoining of double-stranded DNA.. Its function is as follows. A type II topoisomerase that negatively supercoils closed circular double-stranded (ds) DNA in an ATP-dependent manner to modulate DNA topology and maintain chromosomes in an underwound state. Negative supercoiling favors strand separation, and DNA replication, transcription, recombination and repair, all of which involve strand separation. Also able to catalyze the interconversion of other topological isomers of dsDNA rings, including catenanes and knotted rings. Type II topoisomerases break and join 2 DNA strands simultaneously in an ATP-dependent manner. In Chlamydia muridarum (strain MoPn / Nigg), this protein is DNA gyrase subunit A.